Consider the following 201-residue polypeptide: 3-isopropylmalate dehydratase small subunit (201 aa).

The protein belongs to the LeuD family. LeuD type 1 subfamily. Heterodimer of LeuC and LeuD.

The enzyme catalyses (2R,3S)-3-isopropylmalate = (2S)-2-isopropylmalate. Its pathway is amino-acid biosynthesis; L-leucine biosynthesis; L-leucine from 3-methyl-2-oxobutanoate: step 2/4. Catalyzes the isomerization between 2-isopropylmalate and 3-isopropylmalate, via the formation of 2-isopropylmaleate. This Jannaschia sp. (strain CCS1) protein is 3-isopropylmalate dehydratase small subunit.